The following is a 400-amino-acid chain: Cytoplasmic polyadenylated homeobox-like protein 2 (400 aa).

The disordered stretch occupies residues 1–29 (MSSQAFPAEEDHHNEERQTKKKRKTKHRH). Residues 9–18 (EEDHHNEERQ) show a composition bias toward basic and acidic residues. The span at 19–29 (TKKKRKTKHRH) shows a compositional bias: basic residues. Residues 24 to 83 (KTKHRHKFSEELLQELKEIFGENGYPDFTTRKTLANKFDCPVNVINNWFQNNRARLPPEE) constitute a DNA-binding region (homeobox).

It localises to the nucleus. The polypeptide is Cytoplasmic polyadenylated homeobox-like protein 2 (Homo sapiens (Human)).